Consider the following 285-residue polypeptide: Probable methyltransferase ltbC (285 aa).

Residues 1–22 are disordered; sequence MASTGQTNNYKQGYSSQTVETQ.

The protein belongs to the class I-like SAM-binding methyltransferase superfamily. As to quaternary structure, monomer.

Functionally, probable methyltransferase; part of the gene cluster that mediates the biosynthesis of luteodienoside A, a glycosylated polyketide consisting of an unusual 1-O-beta-D-glucopyranosyl-myo-inositol (glucinol) ester of 3-hydroxy-2,2,4-trimethylocta-4,6-dienoic acid. The HR-PKS ltbA produces the trimethylated polyketide chain from acetyl-CoA, malonyl-CoA and S-adenosylmethionine (SAM), and the ltbA cAT domain then uses glucinol produced by the glycosyltransferase ltbB as an offloading substrate to release luteodienoside A. Since ltbA and ltbB are sufficient for the biosynthesis of luteodienoside A, the functions of the methyltransferase ltbC and the FAD-binding monooxygenase ltbD within the pathway remain obscur. The polypeptide is Probable methyltransferase ltbC (Aspergillus luteorubrus).